The sequence spans 71 residues: Serine palmitoyltransferase small subunit A (71 aa).

The Cytoplasmic portion of the chain corresponds to 1 to 12; sequence MAGMALARAWKQ. The chain crosses the membrane as a helical span at residues 13-29; that stretch reads MSWFYYQYLLVTALYML. Residues 30–34 are Lumenal-facing; that stretch reads EPWER. The chain crosses the membrane as a helical span at residues 35-57; that stretch reads TVFNSMLVSVVGMALYTGYVFMP. Residues 58-71 are Cytoplasmic-facing; the sequence is QHIMAILHYFEIVQ.

The protein belongs to the SPTSS family. SPTSSA subfamily. In terms of assembly, component of the serine palmitoyltransferase (SPT) complex, which is composed of SPTLC1, SPTLC2 or SPTLC3 and SPTSSA or SPTSSB. The heterodimer consisting of SPTLC1 and SPTLC2/SPTLC3 forms the catalytic core of the enzyme, while SPTSSA or SPTSSB subunits determine substrate specificity. SPT also interacts with ORMDL proteins, especially ORMDL3, which negatively regulate SPT activity in the presence of ceramides. Interacts with MBOAT7; the interaction plays a role in MBOAT7 localization to mitochondria-associated membranes.

The protein resides in the endoplasmic reticulum membrane. It functions in the pathway lipid metabolism; sphingolipid metabolism. Functionally, component of the serine palmitoyltransferase multisubunit enzyme (SPT) that catalyzes the initial and rate-limiting step in sphingolipid biosynthesis by condensing L-serine and activated acyl-CoA (most commonly palmitoyl-CoA) to form long-chain bases. The SPT complex is composed of SPTLC1, SPTLC2 or SPTLC3 and SPTSSA or SPTSSB. Within this complex, the heterodimer consisting of SPTLC1 and SPTLC2/SPTLC3 forms the catalytic core. Within the SPT complex, SPTSSA stimulates the catalytic activity and plays a role in substrate specificity, which depends upon the overall complex composition. The SPTLC1-SPTLC2-SPTSSA complex shows a strong preference for C16-CoA substrate, while the SPTLC1-SPTLC3-SPTSSA isozyme uses both C14-CoA and C16-CoA as substrates, with a slight preference for C14-CoA. Independently of its action as a SPT component, may be involved in MBOAT7 localization to mitochondria-associated membranes, a membrane bridge between the endoplasmic reticulum and mitochondria, may hence affect MBOAT7-catalyzed incorporation of arachidonic acid into phosphatidylinositol. The chain is Serine palmitoyltransferase small subunit A from Mus musculus (Mouse).